The primary structure comprises 236 residues: UPF0257 lipoprotein YnfC (236 aa).

The N-terminal stretch at 1-16 (MKYKLLPCLLAILLTG) is a signal peptide. Cysteine 17 carries N-palmitoyl cysteine lipidation. Cysteine 17 carries the S-diacylglycerol cysteine lipid modification.

This sequence belongs to the UPF0257 family.

Its subcellular location is the cell membrane. The protein is UPF0257 lipoprotein YnfC of Escherichia coli O45:K1 (strain S88 / ExPEC).